The following is a 154-amino-acid chain: Transcriptional repressor NrdR (154 aa).

A zinc finger lies at 3 to 34 (CPFCRHPDSRVIDSRETDEGQAIRRRRSCPEC). In terms of domain architecture, ATP-cone spans 46–136 (LAVVKRSGVT…VYRSFSSADD (91 aa)).

This sequence belongs to the NrdR family. Zn(2+) serves as cofactor.

Negatively regulates transcription of bacterial ribonucleotide reductase nrd genes and operons by binding to NrdR-boxes. The protein is Transcriptional repressor NrdR of Mycobacterium bovis (strain ATCC BAA-935 / AF2122/97).